The chain runs to 234 residues: Alpha N-terminal protein methyltransferase 1 (234 aa).

S-adenosyl-L-methionine contacts are provided by residues glycine 71, arginine 76, 93–95, 120–121, and glutamine 136; these read DVV and LQ.

Belongs to the methyltransferase superfamily. NTM1 family. Expressed in uterine cells and PVT neurons of the tail. Expressed in pharynx, intestine and DVB tail neuron.

The catalysed reaction is N-terminal L-alanyl-L-prolyl-L-lysyl-[protein] + 3 S-adenosyl-L-methionine = N-terminal N,N,N-trimethyl-L-alanyl-L-prolyl-L-lysyl-[protein] + 3 S-adenosyl-L-homocysteine + 3 H(+). It catalyses the reaction N-terminal L-seryl-L-prolyl-L-lysyl-[protein] + 3 S-adenosyl-L-methionine = N-terminal N,N,N-trimethyl-L-seryl-L-prolyl-L-lysyl-[protein] + 3 S-adenosyl-L-homocysteine + 3 H(+). The enzyme catalyses N-terminal L-prolyl-L-prolyl-L-lysyl-[protein] + 2 S-adenosyl-L-methionine = N-terminal N,N-dimethyl-L-prolyl-L-prolyl-L-lysyl-[protein] + 2 S-adenosyl-L-homocysteine + 2 H(+). In terms of biological role, alpha-N-methyltransferase that methylates the N-terminus of target proteins containing the N-terminal motif [Ala/Pro/Ser]-Pro-Lys when the initiator Met is cleaved. Specifically catalyzes mono-, di- or tri-methylation of exposed alpha-amino group of Ala or Ser residue in the [Ala/Ser]-Pro-Lys motif and mono- or di-methylation of Pro in the Pro-Pro-Lys motif. Probably required for the synthesis of neurotransmitter melatonin from serotonin, which plays a role in promoting a sleep-like state, called lethargus, during larval development. In Caenorhabditis elegans, this protein is Alpha N-terminal protein methyltransferase 1.